The primary structure comprises 460 residues: MATGKIVQVIGAVVDVEFPQDAVPRVYDALEVQNGNEKLVLEVQQQLGGGIVRTIAMGSSDGLRRGLDVKDLEHPIEVPVGKATLGRIMNVLGEPVDMKGEIGEEERWAIHRAAPSYEELSNSQELLETGIKVIDLMCPFAKGGKVGLFGGAGVGKTVNMMELIRNIAIEHSGYSVFAGVGERTREGNDFYHEMTDSNVIDKVSLVYGQMNEPPGNRLRVALTGLTMAEKFRDEGRDVLLFVDNIYRYTLAGTEVSALLGRMPSAVGYQPTLAEEMGVLQERITSTKTGSITSVQAVYVPADDLTDPSPATTFAHLDATVVLSRQIASLGIYPAVDPLDSTSRQLDPLVVGQEHYDTARGVQSILQRYQELKDIIAILGMDELSEEDKLVVARARKIQRFLSQPFFVAEVFTGSPGKYVSLKDTIRGFKGIMEGEYDHLPEQAFYMVGSIDEAVEKAKKL.

Glycine 150–threonine 157 contributes to the ATP binding site.

This sequence belongs to the ATPase alpha/beta chains family. As to quaternary structure, F-type ATPases have 2 components, CF(1) - the catalytic core - and CF(0) - the membrane proton channel. CF(1) has five subunits: alpha(3), beta(3), gamma(1), delta(1), epsilon(1). CF(0) has three main subunits: a(1), b(2) and c(9-12). The alpha and beta chains form an alternating ring which encloses part of the gamma chain. CF(1) is attached to CF(0) by a central stalk formed by the gamma and epsilon chains, while a peripheral stalk is formed by the delta and b chains.

The protein resides in the cell inner membrane. The catalysed reaction is ATP + H2O + 4 H(+)(in) = ADP + phosphate + 5 H(+)(out). Functionally, produces ATP from ADP in the presence of a proton gradient across the membrane. The catalytic sites are hosted primarily by the beta subunits. In Salmonella agona (strain SL483), this protein is ATP synthase subunit beta.